Here is a 341-residue protein sequence, read N- to C-terminus: L-threonine 3-dehydrogenase (341 aa).

Cysteine 38 lines the Zn(2+) pocket. Residues threonine 40 and histidine 43 each act as charge relay system in the active site. 6 residues coordinate Zn(2+): histidine 63, glutamate 64, cysteine 93, cysteine 96, cysteine 99, and cysteine 107. NAD(+) contacts are provided by residues isoleucine 175, aspartate 195, arginine 200, 262-264 (LGI), and 286-287 (IY).

It belongs to the zinc-containing alcohol dehydrogenase family. In terms of assembly, homotetramer. Zn(2+) serves as cofactor.

The protein localises to the cytoplasm. The catalysed reaction is L-threonine + NAD(+) = (2S)-2-amino-3-oxobutanoate + NADH + H(+). It functions in the pathway amino-acid degradation; L-threonine degradation via oxydo-reductase pathway; glycine from L-threonine: step 1/2. In terms of biological role, catalyzes the NAD(+)-dependent oxidation of L-threonine to 2-amino-3-ketobutyrate. In Shewanella sp. (strain MR-7), this protein is L-threonine 3-dehydrogenase.